The chain runs to 297 residues: ClpXP adapter protein SpxH (297 aa).

It belongs to the SpxH family. In terms of assembly, interacts with Spx.

The protein localises to the cytoplasm. In terms of biological role, adapter protein required for efficient degradation of Spx by ClpXP under non-stress conditions. Interaction with Spx stabilizes Spx and exposes the C-terminus of Spx for recognition and proteolysis by ClpXP. This Bacillus cereus (strain ATCC 14579 / DSM 31 / CCUG 7414 / JCM 2152 / NBRC 15305 / NCIMB 9373 / NCTC 2599 / NRRL B-3711) protein is ClpXP adapter protein SpxH.